Consider the following 237-residue polypeptide: Bax inhibitor 1 (237 aa).

At 1 to 29 the chain is on the cytoplasmic side; it reads MNIFDRKINFDALLKFSHITPSTQQHLKK. K7 participates in a covalent cross-link: Glycyl lysine isopeptide (Lys-Gly) (interchain with G-Cter in ubiquitin). Residues 30–50 traverse the membrane as a helical segment; the sequence is VYASFALCMFVAAAGAYVHVV. Over 51–52 the chain is Lumenal; it reads TR. A helical membrane pass occupies residues 53–73; sequence FIQAGLLSALGALALMICLMA. At 74-86 the chain is on the cytoplasmic side; it reads TPHSHETEQKRLG. A helical membrane pass occupies residues 87–107; it reads LLAGFAFLTGVGLGPALELCI. At 108-112 the chain is on the lumenal side; it reads AINPS. Residues 113 to 133 traverse the membrane as a helical segment; sequence ILPTAFMGTAMIFTCFSLSAL. Over 134 to 139 the chain is Cytoplasmic; it reads YARRRS. A helical transmembrane segment spans residues 140–160; the sequence is YLFLGGILMSAMSLMFVSSLG. The Lumenal segment spans residues 161 to 166; that stretch reads NLFFGS. The chain crosses the membrane as a helical span at residues 167-187; that stretch reads IWLFQANLYMGLLVMCGFVLF. At 188 to 206 the chain is on the cytoplasmic side; that stretch reads DTQLIIEKAEHGDKDYIWH. The helical intramembrane region spans 207 to 227; that stretch reads CIDLFLDFVTLFRKLMLILAF. Topologically, residues 228 to 237 are cytoplasmic; that stretch reads NEKDKKKEKK.

This sequence belongs to the BI1 family. Interacts with BCL2 and BCL2L1. Interacts with ERN1. Ubiquitinated by BFAR, leading to proteasomal degradation. In terms of tissue distribution, highly abundant in adult testis.

It localises to the endoplasmic reticulum membrane. In terms of biological role, endoplasmic reticulum (ER)-resident protein that confers cellular protection as an anti-apoptotic protein by limiting multiple stress-inducing pathways surrounding the endoplasmic reticulum and mitochondria. Inhibits the activities of the key sensor for the endoplasmic reticulum unfolded protein response IRE1alpha/ERN1 both directly and by blocking BAX/BAK binding. Modulates ER calcium homeostasis by acting as a calcium-leak channel. Negatively regulates autophagy and autophagosome formation, especially during periods of nutrient deprivation, and reduces cell survival during starvation. This chain is Bax inhibitor 1 (Tmbim6), found in Rattus norvegicus (Rat).